The following is a 272-amino-acid chain: 2-dehydro-3-deoxyphosphooctonate aldolase (272 aa).

Belongs to the KdsA family.

It localises to the cytoplasm. The catalysed reaction is D-arabinose 5-phosphate + phosphoenolpyruvate + H2O = 3-deoxy-alpha-D-manno-2-octulosonate-8-phosphate + phosphate. It functions in the pathway carbohydrate biosynthesis; 3-deoxy-D-manno-octulosonate biosynthesis; 3-deoxy-D-manno-octulosonate from D-ribulose 5-phosphate: step 2/3. It participates in bacterial outer membrane biogenesis; lipopolysaccharide biosynthesis. The protein is 2-dehydro-3-deoxyphosphooctonate aldolase of Pelobacter propionicus (strain DSM 2379 / NBRC 103807 / OttBd1).